The chain runs to 89 residues: MSSLDKTMYFDFDNDSVKDVHDTLTTVYEALQEKGYNPINQIVGYLLSGDPAYIPRLKDARNLIRKHQRDEIIEELVKSYLKADKDVDA.

The protein belongs to the UPF0297 family.

The polypeptide is UPF0297 protein lp_2275 (Lactiplantibacillus plantarum (strain ATCC BAA-793 / NCIMB 8826 / WCFS1) (Lactobacillus plantarum)).